The chain runs to 199 residues: mRNA export protein mlo3 (199 aa).

Positions 1 to 41 are disordered; sequence MSMELDQSLDAIIASKPKGGIRKRRARSNKPKPTKNAKPAV. Residues 19–35 show a composition bias toward basic residues; sequence GGIRKRRARSNKPKPTK. Residues 55-134 form the RRM domain; it reads SKIIVSNLPT…RKMKVEIILD (80 aa). The interval 144 to 199 is disordered; that stretch reads ARVSPASNASATASKNGAKSSKRKTTRRRRTPNRPKKSAEELDKEMDDYFGSNEKE. Residues 148–161 show a composition bias toward polar residues; it reads PASNASATASKNGA. Residues 163–179 are compositionally biased toward basic residues; it reads SSKRKTTRRRRTPNRPK.

Interacts with rpn15/dss1, mex67 and uap56.

The protein localises to the nucleus. Functionally, has a role in the mRNA export process. Interferes with mitotic chromosome segregation when overexpressed. The chain is mRNA export protein mlo3 (mlo3) from Schizosaccharomyces pombe (strain 972 / ATCC 24843) (Fission yeast).